The primary structure comprises 148 residues: Deoxyuridine 5'-triphosphate nucleotidohydrolase (148 aa).

Substrate is bound by residues 67 to 69 (RSG), N80, 84 to 86 (LID), and M94.

Belongs to the dUTPase family. Mg(2+) is required as a cofactor.

The catalysed reaction is dUTP + H2O = dUMP + diphosphate + H(+). It participates in pyrimidine metabolism; dUMP biosynthesis; dUMP from dCTP (dUTP route): step 2/2. Its function is as follows. This enzyme is involved in nucleotide metabolism: it produces dUMP, the immediate precursor of thymidine nucleotides and it decreases the intracellular concentration of dUTP so that uracil cannot be incorporated into DNA. The sequence is that of Deoxyuridine 5'-triphosphate nucleotidohydrolase from Burkholderia multivorans (strain ATCC 17616 / 249).